Here is a 419-residue protein sequence, read N- to C-terminus: Tol-Pal system protein TolB (419 aa).

The N-terminal stretch at 1–19 (MFNRIISLFLLLFTGQVIA) is a signal peptide.

Belongs to the TolB family. In terms of assembly, the Tol-Pal system is composed of five core proteins: the inner membrane proteins TolA, TolQ and TolR, the periplasmic protein TolB and the outer membrane protein Pal. They form a network linking the inner and outer membranes and the peptidoglycan layer.

Its subcellular location is the periplasm. Its function is as follows. Part of the Tol-Pal system, which plays a role in outer membrane invagination during cell division and is important for maintaining outer membrane integrity. This chain is Tol-Pal system protein TolB, found in Legionella pneumophila (strain Corby).